Reading from the N-terminus, the 305-residue chain is Acetyl-coenzyme A carboxylase carboxyl transferase subunit beta (305 aa).

In terms of domain architecture, CoA carboxyltransferase N-terminal spans 29–298 (LWTKCESCDA…EMKLPLLESS (270 aa)). 4 residues coordinate Zn(2+): cysteine 33, cysteine 36, cysteine 52, and cysteine 55. A C4-type zinc finger spans residues 33-55 (CESCDALTYTKDLQANLMVCLQC).

Belongs to the AccD/PCCB family. Acetyl-CoA carboxylase is a heterohexamer composed of biotin carboxyl carrier protein (AccB), biotin carboxylase (AccC) and two subunits each of ACCase subunit alpha (AccA) and ACCase subunit beta (AccD). The cofactor is Zn(2+).

Its subcellular location is the cytoplasm. It carries out the reaction N(6)-carboxybiotinyl-L-lysyl-[protein] + acetyl-CoA = N(6)-biotinyl-L-lysyl-[protein] + malonyl-CoA. Its pathway is lipid metabolism; malonyl-CoA biosynthesis; malonyl-CoA from acetyl-CoA: step 1/1. Functionally, component of the acetyl coenzyme A carboxylase (ACC) complex. Biotin carboxylase (BC) catalyzes the carboxylation of biotin on its carrier protein (BCCP) and then the CO(2) group is transferred by the transcarboxylase to acetyl-CoA to form malonyl-CoA. The chain is Acetyl-coenzyme A carboxylase carboxyl transferase subunit beta from Synechococcus sp. (strain ATCC 27144 / PCC 6301 / SAUG 1402/1) (Anacystis nidulans).